Here is a 476-residue protein sequence, read N- to C-terminus: Cysteine--tRNA ligase (476 aa).

C36 serves as a coordination point for Zn(2+). Positions 38–48 match the 'HIGH' region motif; it reads PTVYDYAHIGN. 3 residues coordinate Zn(2+): C221, H246, and E250. The 'KMSKS' region motif lies at 278–282; sequence KMSKS. K281 lines the ATP pocket.

It belongs to the class-I aminoacyl-tRNA synthetase family. In terms of assembly, monomer. The cofactor is Zn(2+).

It localises to the cytoplasm. The enzyme catalyses tRNA(Cys) + L-cysteine + ATP = L-cysteinyl-tRNA(Cys) + AMP + diphosphate. The polypeptide is Cysteine--tRNA ligase (Chlamydia abortus (strain DSM 27085 / S26/3) (Chlamydophila abortus)).